The following is a 297-amino-acid chain: Probable endonuclease 4 (297 aa).

The Zn(2+) site is built by His-69, His-110, Glu-145, Asp-179, His-182, His-214, Asp-227, His-229, and Glu-259.

It belongs to the AP endonuclease 2 family. The cofactor is Zn(2+).

It carries out the reaction Endonucleolytic cleavage to 5'-phosphooligonucleotide end-products.. In terms of biological role, endonuclease IV plays a role in DNA repair. It cleaves phosphodiester bonds at apurinic or apyrimidinic (AP) sites, generating a 3'-hydroxyl group and a 5'-terminal sugar phosphate. The protein is Probable endonuclease 4 of Bacillus subtilis (strain 168).